A 278-amino-acid polypeptide reads, in one-letter code: MHPDSQLETAVKNGFDPKSLYSTELTKVNEPARTILEQYSKIPAEKVLQHVKDLKDRAFEVFPYACIGQASFLELSIASSPCYPEMLDRVKKGDRLLDLGCAFGQELRQLIYDGAPSQNLYGTDLRPEFLELGLDLFLDRSFIKSHFIDADVLDDKSALVTQLTGELNIVYISLFLHVFDFETQIKVAKRVLDLLAPKAGSLIVCRVVACRDQAIGNATNARLPYYYHDLASWNRLWERVQEETGLKLKVDNWEQDDALAKKHPLEGIYMLGSSIRRE.

S-adenosyl-L-methionine contacts are provided by residues 124–125, 151–152, and 152–153; these read DL, DV, and VL.

This sequence belongs to the class I-like SAM-binding methyltransferase superfamily. In terms of assembly, homodimer.

It functions in the pathway secondary metabolite biosynthesis; terpenoid biosynthesis. Functionally, methyltransferase; part of the gene cluster that mediates the biosynthesis of andrastins, meroterpenoid compounds that exhibit inhibitory activity against ras farnesyltransferase, suggesting that they could be promising leads for antitumor agents. The first step of the pathway is the synthesis of 3,5-dimethylorsellinic acid (DMOA) by the polyketide synthase adrD via condensation of one acetyl-CoA starter unit with 3 malonyl-CoA units and 2 methylations. DMAO is then converted to farnesyl-DMAO by the prenyltransferase adrG. The methyltransferase adrK catalyzes the methylation of the carboxyl group of farnesyl-DMAO to farnesyl-DMAO methyl ester which is further converted to epoxyfarnesyl-DMAO methyl ester by the FAD-dependent monooxygenase adrH. The terpene cyclase adrI then catalyzes the carbon skeletal rearrangement to generate the andrastin E, the first compound in the pathway having the andrastin scaffold, with the tetracyclic ring system. The post-cyclization tailoring enzymes adrF, adrE, adrJ, and adrA, are involved in the conversion of andrastin E into andrastin A. The short chain dehydrogenase adrF is responsible for the oxidation of the C-3 a hydroxyl group of andrastin E to yield the corresponding ketone, andrastin D. The ketoreductase adrE stereoselectively reduces the carbonyl moiety to reverse the stereochemistry of the C-3 position to yield andrastin F. The acetyltransferase adrJ is the acetyltransferase that attaches the acetyl group to the C-3 hydroxyl group of andrastin F to yield andrastin C. Finally, the cytochrome P450 monooxygenase adrA catalyzes two sequential oxidation reactions of the C-23 methyl group, to generate the corresponding alcohol andrastin B, and aldehyde andrastin A. In Penicillium roqueforti, this protein is Methyltransferase adrK.